The following is a 301-amino-acid chain: Prohibitin-2 (301 aa).

Necessary for transcriptional repression regions lie at residues 19–49 (MGTA…GHRA) and 150–174 (ASQL…RAKD). A coiled-coil region spans residues 191–237 (REYTAAVESKQVAQQEAQRAQFLVEKAKQDQKQKIVQAEGEAAAAKM).

Belongs to the prohibitin family. As to quaternary structure, the mitochondrial prohibitin complex consists of two subunits (PHB1 and PHB2), assembled into a membrane-associated ring-shaped supercomplex of approximately 1 mDa.

The protein resides in the mitochondrion inner membrane. It is found in the cytoplasm. It localises to the nucleus. Its subcellular location is the cell membrane. In terms of biological role, protein with pleiotropic attributes mediated in a cell-compartment- and tissue-specific manner, which include the plasma membrane-associated cell signaling functions, mitochondrial chaperone, and transcriptional co-regulator of transcription factors and sex steroid hormones in the nucleus. In the mitochondria, together with PHB, forms large ring complexes (prohibitin complexes) in the inner mitochondrial membrane (IMM) and functions as a chaperone protein that stabilizes mitochondrial respiratory enzymes and maintains mitochondrial integrity in the IMM, which is required for mitochondrial morphogenesis, neuronal survival, and normal lifespan. Functionally, in the nucleus, serves as transcriptional co-regulator. The polypeptide is Prohibitin-2 (phb2) (Xenopus tropicalis (Western clawed frog)).